The chain runs to 853 residues: DNA mismatch repair protein MutS (853 aa).

Residue 614–621 participates in ATP binding; that stretch reads GPNMGGKS.

It belongs to the DNA mismatch repair MutS family.

In terms of biological role, this protein is involved in the repair of mismatches in DNA. It is possible that it carries out the mismatch recognition step. This protein has a weak ATPase activity. This is DNA mismatch repair protein MutS from Escherichia coli O81 (strain ED1a).